The primary structure comprises 1948 residues: Chromodomain-helicase-DNA-binding protein 5 (1948 aa).

Disordered stretches follow at residues 1-136 (MRGP…SGQL), 228-268 (SPQQ…GRGK), and 281-336 (SKRK…GDGY). 2 stretches are compositionally biased toward acidic residues: residues 17-37 (EEMENEEEMSEEEDGGLEGFE) and 71-89 (NDELSENEEDLEEKSESEG). Basic residues-rich tracts occupy residues 95–114 (TKKKKKKLKEKKEKKAKRKK) and 250–268 (GVRKKNKGAKDSKKKGRGK). Residues 289 to 299 (SEEDEPEDSDL) show a composition bias toward acidic residues. Residues 319–328 (KKNKRRRKKK) are compositionally biased toward basic residues. 2 PHD-type zinc fingers span residues 341-388 (QDYC…CEKE) and 414-461 (MEFC…CTCP). The segment at 341-651 (QDYCEVCQQG…HRELMLGEDA (311 aa)) is histone-binding. The Chromo 1 domain occupies 495–552 (MPPPRPLEGIPEREFFVKWAGLSYWHCSWVKELQLELYHTVMYRNYQRKNDMDEPPPF). The disordered stretch occupies residues 547–569 (DEPPPFDYGSGDEDGKSEKRKNK). Residues 559–569 (EDGKSEKRKNK) show a composition bias toward basic and acidic residues. The 62-residue stretch at 590-651 (MMVHRILNHS…HRELMLGEDA (62 aa)) folds into the Chromo 2 domain. One can recognise a Helicase ATP-binding domain in the interval 710–894 (RFSWAQGTDT…FHLLNFLTPE (185 aa)). 723–730 (DEMGLGKT) contacts ATP. The DEAH box signature appears at 845–848 (DEAH). Positions 1026–1191 (LLQKMLKKLR…MTKQELDDIL (166 aa)) constitute a Helicase C-terminal domain. 4 disordered regions span residues 1206–1250 (MMSQ…VEDS), 1349–1409 (YNDA…LPPL), 1521–1566 (KYST…LPDK), and 1595–1692 (TALD…EDKN). Composition is skewed to acidic residues over residues 1353-1364 (SQEDQEWQDELS) and 1374-1383 (SEDEDEDFEE). Position 1388 is an N5-methylglutamine (glutamine 1388). Pro residues predominate over residues 1547–1561 (TPVPASPAQLPPAPL). Position 1552 is a phosphoserine (serine 1552). 3 stretches are compositionally biased toward basic and acidic residues: residues 1598-1625 (DRVEAEDKHQSSDSKDRAREERMEEVEK), 1633-1650 (PLKEETLPDKEPVPDKLE), and 1657-1672 (NDFRPDDPKAEEKEPT).

It belongs to the SNF2/RAD54 helicase family. In terms of assembly, component of the nucleosome remodeling and deacetylase (NuRD) repressor complex, composed of core proteins MTA1, MTA2, MTA3, RBBP4, RBBP7, HDAC1, HDAC2, MBD2, MBD3, and peripherally associated proteins CDK2AP1, CDK2AP2, GATAD2A, GATAD2B, CHD3, CHD4 and CHD5. The exact stoichiometry of the NuRD complex is unknown, and some subunits such as MBD2 and MBD3, GATAD2A and GATAD2B, and CHD3, CHD4 and CHD5 define mutually exclusive NuRD complexes. Interacts with HDAC2. Post-translationally, methylated at Gln-1388 by N6AMT1. As to expression, expressed in brain regions enriched in neurons and not in regions rich in glial cells (at protein level).

It is found in the nucleus. The protein resides in the chromosome. The catalysed reaction is ATP + H2O = ADP + phosphate + H(+). ATP-dependent chromatin-remodeling factor that binds DNA through histones and regulates gene transcription. May specifically recognize and bind trimethylated 'Lys-27' (H3K27me3) and non-methylated 'Lys-4' of histone H3. Acts as a component of the histone deacetylase NuRD complex which participates in the remodeling of chromatin. Plays a role in the development of the nervous system by activating the expression of genes promoting neuron terminal differentiation. In parallel, it may also positively regulate the trimethylation of histone H3 at 'Lys-27' thereby specifically repressing genes that promote the differentiation into non-neuronal cell lineages. Regulates the expression of genes involved in cell proliferation and differentiation. Downstream activated genes may include CDKN2A that positively regulates the p53/TP53 pathway, which in turn, prevents cell proliferation. In spermatogenesis, it probably regulates histone hyperacetylation and the replacement of histones by transition proteins in chromatin, a crucial step in the condensation of spermatid chromatin and the production of functional spermatozoa. The polypeptide is Chromodomain-helicase-DNA-binding protein 5 (Chd5) (Rattus norvegicus (Rat)).